Reading from the N-terminus, the 751-residue chain is Semaphorin-3C (751 aa).

The N-terminal stretch at 1–21 (MAVLALHAVFGIFIYFSSVKG) is a signal peptide. The Sema domain maps to 28–511 (RVFLTFNELQ…SEEGVTQVPL (484 aa)). An N-linked (GlcNAc...) asparagine glycan is attached at asparagine 81. The cysteines at positions 101 and 112 are disulfide-linked. A glycan (N-linked (GlcNAc...) asparagine) is linked at asparagine 123. 3 disulfide bridges follow: cysteine 130-cysteine 139, cysteine 266-cysteine 378, and cysteine 290-cysteine 338. Asparagine 268 carries N-linked (GlcNAc...) asparagine glycosylation. Asparagine 465 is a glycosylation site (N-linked (GlcNAc...) asparagine). An intrachain disulfide couples cysteine 514 to cysteine 532. The Ig-like C2-type domain maps to 571 to 655 (AYRNAAETVQ…TENNFKQTLA (85 aa)). N-linked (GlcNAc...) asparagine glycans are attached at residues asparagine 585 and asparagine 586. Cysteines 643 and 709 form a disulfide. Residues 712-731 (SRQQGQRREEPQKMRGDYSK) show a composition bias toward basic and acidic residues. The interval 712 to 751 (SRQQGQRREEPQKMRGDYSKLKALINSRKSRNRRNQLPAS) is disordered.

Belongs to the semaphorin family. Collapsin-1, -2, -3, and -5 bind to overlapping but distinct axon tracts.

The protein localises to the secreted. Functionally, induces the collapse and paralysis of neuronal growth cones. Could potentially act as repulsive cues toward specific neuronal populations. Binds to neuropilin. The protein is Semaphorin-3C (SEMA3C) of Gallus gallus (Chicken).